A 1458-amino-acid polypeptide reads, in one-letter code: Anaphase-promoting complex subunit 1 (1458 aa).

A disordered region spans residues glutamine 186–arginine 210. The segment covering arginine 196–arginine 210 has biased composition (basic and acidic residues). PC repeat units follow at residues glycine 873 to serine 895, alanine 959 to lysine 982, glycine 1006 to alanine 1024, and glycine 1099 to leucine 1124.

This sequence belongs to the APC1 family. As to quaternary structure, the APC/C is composed of at least 13 subunits: apc1, apc2, nuc2, apc4, apc5, cut9, apc8, apc10, apc11, hcn1, apc13, apc14 and apc15.

Its function is as follows. Component of the anaphase-promoting complex/cyclosome (APC/C), a cell cycle-regulated E3 ubiquitin-protein ligase complex that controls progression through mitosis and the G1 phase of the cell cycle. The APC/C is thought to confer substrate specificity and, in the presence of ubiquitin-conjugating E2 enzymes, it catalyzes the formation of protein-ubiquitin conjugates that are subsequently degraded by the 26S proteasome. Mutations to this protein prevent the exit from mitosis. In Schizosaccharomyces pombe (strain 972 / ATCC 24843) (Fission yeast), this protein is Anaphase-promoting complex subunit 1 (cut4).